The following is a 151-amino-acid chain: DNA-directed RNA polymerase RPB6 homolog (151 aa).

Residues 20–44 show a composition bias toward acidic residues; that stretch reads ETEEENFVDSEEESEDKSEDKDEIV. Positions 20–46 are disordered; it reads ETEEENFVDSEEESEDKSEDKDEIVES.

This sequence belongs to the archaeal RpoK/eukaryotic RPB6 RNA polymerase subunit family. As to quaternary structure, part of the viral DNA-directed RNA polymerase that consists of 8 polII-like subunits (RPB1, RPB2, RPB3, RPB5, RPB6, RPB7, RPB9, RPB10), a capping enzyme and a termination factor.

It localises to the host cytoplasm. Its subcellular location is the virion. Functionally, component of the DNA-directed RNA polymerase (RNAP) that catalyzes the transcription in the cytoplasm of viral DNA into RNA using the four ribonucleoside triphosphates as substrates. The sequence is that of DNA-directed RNA polymerase RPB6 homolog from African swine fever virus (isolate Tick/Malawi/Lil 20-1/1983) (ASFV).